The primary structure comprises 257 residues: Acetylglutamate kinase (257 aa).

Residues 43-44 (GG), Arg-65, and Asn-157 contribute to the substrate site. ATP is bound by residues 180–185 (DISGIL) and 208–210 (IIT).

The protein belongs to the acetylglutamate kinase family. ArgB subfamily. As to quaternary structure, homodimer.

It localises to the cytoplasm. The catalysed reaction is N-acetyl-L-glutamate + ATP = N-acetyl-L-glutamyl 5-phosphate + ADP. The protein operates within amino-acid biosynthesis; L-arginine biosynthesis; N(2)-acetyl-L-ornithine from L-glutamate: step 2/4. Catalyzes the ATP-dependent phosphorylation of N-acetyl-L-glutamate. This is Acetylglutamate kinase from Sodalis glossinidius (strain morsitans).